The following is a 406-amino-acid chain: Phosphorylase b kinase gamma catalytic chain, liver/testis isoform (406 aa).

In terms of domain architecture, Protein kinase spans 24–291; that stretch reads YDPKDVIGRG…AEQALQHPFF (268 aa). ATP-binding positions include 30-38 and Lys53; that span reads IGRGVSSVV. Asp153 (proton acceptor) is an active-site residue. Residues 306–330 form a calmodulin-binding (domain-N) region; that stretch reads QRFRVAVWTVLAAGRVALSTHRVRP. Ser345 is modified (phosphoserine). The segment at 346 to 370 is calmodulin-binding (domain-C); it reads VRHLIDNCAFRLYGHWVKKGEQQNR.

This sequence belongs to the protein kinase superfamily. CAMK Ser/Thr protein kinase family. As to quaternary structure, hexadecamer of 4 heterotetramers, each composed of alpha, beta, gamma, and delta subunits. Alpha (PHKA1 or PHKA2) and beta (PHKB) are regulatory subunits, gamma (PHKG1 or PHKG2) is the catalytic subunit, and delta is calmodulin.

The catalysed reaction is 2 ATP + phosphorylase b = 2 ADP + phosphorylase a.. In terms of biological role, catalytic subunit of the phosphorylase b kinase (PHK), which mediates the neural and hormonal regulation of glycogen breakdown (glycogenolysis) by phosphorylating and thereby activating glycogen phosphorylase. May regulate glycogeneolysis in the testis. In vitro, phosphorylates PYGM. This Homo sapiens (Human) protein is Phosphorylase b kinase gamma catalytic chain, liver/testis isoform (PHKG2).